Here is an 83-residue protein sequence, read N- to C-terminus: Large ribosomal subunit protein bL31B (83 aa).

Belongs to the bacterial ribosomal protein bL31 family. Type B subfamily. As to quaternary structure, part of the 50S ribosomal subunit.

In Tropheryma whipplei (strain TW08/27) (Whipple's bacillus), this protein is Large ribosomal subunit protein bL31B.